A 482-amino-acid polypeptide reads, in one-letter code: UDP-N-acetylmuramate--L-alanine ligase (482 aa).

123–129 (GTHGKTT) lines the ATP pocket.

Belongs to the MurCDEF family.

The protein localises to the cytoplasm. It carries out the reaction UDP-N-acetyl-alpha-D-muramate + L-alanine + ATP = UDP-N-acetyl-alpha-D-muramoyl-L-alanine + ADP + phosphate + H(+). It functions in the pathway cell wall biogenesis; peptidoglycan biosynthesis. In terms of biological role, cell wall formation. The chain is UDP-N-acetylmuramate--L-alanine ligase from Pseudomonas putida (strain ATCC 700007 / DSM 6899 / JCM 31910 / BCRC 17059 / LMG 24140 / F1).